A 143-amino-acid polypeptide reads, in one-letter code: Small ribosomal subunit protein bS18 (143 aa).

The tract at residues 1-72 (MARPDMGGPK…RGGEEGGRRG (72 aa)) is disordered. Positions 10–50 (KSSGGFGGPRSGGGFGGGGYGGGGGGGGGYGGGGGGGFGGR) are enriched in gly residues. A compositionally biased stretch (basic and acidic residues) spans 51–70 (GGDRGDRGDRDDRGGEEGGR).

This sequence belongs to the bacterial ribosomal protein bS18 family. Part of the 30S ribosomal subunit. Forms a tight heterodimer with protein bS6.

Its function is as follows. Binds as a heterodimer with protein bS6 to the central domain of the 16S rRNA, where it helps stabilize the platform of the 30S subunit. This chain is Small ribosomal subunit protein bS18, found in Anaeromyxobacter sp. (strain Fw109-5).